Consider the following 436-residue polypeptide: Transcriptional regulator dmxR14 (436 aa).

Over residues 1–27 (MEEAETNTQVDSVPSNSVRSGAELSSK) the composition is skewed to polar residues. Residues 1–32 (MEEAETNTQVDSVPSNSVRSGAELSSKSKLRD) form a disordered region. Positions 34–61 (CHACARSKVRCPKQKPSCSRCEARGTTC) form a DNA-binding region, zn(2)-C6 fungal-type. Positions 67–136 (RRPGRRRETS…ITTVHNGPEN (70 aa)) are disordered. Residues 90 to 136 (SHANNRNSPSFSSTRSTLPSPIASDSNSNFTQPQNSSITTVHNGPEN) show a composition bias toward polar residues.

It localises to the nucleus. Functionally, transcriptional regulator; part of the gene cluster that mediates the biosynthesis of the dimeric xanthones cryptosporioptides. The chain is Transcriptional regulator dmxR14 from Cryptosporiopsis sp. (strain 8999).